Reading from the N-terminus, the 118-residue chain is Large ribosomal subunit protein eL22 (118 aa).

Belongs to the eukaryotic ribosomal protein eL22 family.

This is Large ribosomal subunit protein eL22 (RPL22) from Tetrahymena thermophila (strain SB210).